The sequence spans 198 residues: Ribonuclease HII (198 aa).

The RNase H type-2 domain maps to 11-198 (NLIAGVDEVG…GPVKRVLGLV (188 aa)). 3 residues coordinate a divalent metal cation: aspartate 17, glutamate 18, and aspartate 109.

The protein belongs to the RNase HII family. Mn(2+) is required as a cofactor. It depends on Mg(2+) as a cofactor.

Its subcellular location is the cytoplasm. The enzyme catalyses Endonucleolytic cleavage to 5'-phosphomonoester.. Endonuclease that specifically degrades the RNA of RNA-DNA hybrids. In Yersinia pseudotuberculosis serotype O:1b (strain IP 31758), this protein is Ribonuclease HII.